We begin with the raw amino-acid sequence, 579 residues long: MAVAAALLRRRALYSALASPSWLHDTSSCYICSISGTHSLVNHPNLRLQRGYHNSGKFDLTDLTHPHIWYPNAREKKRNVFLHVGPTNSGKTHNALKRLEASSSGVYCGPLRLLAREVAQRLNKANVPCNLITGQEREEIEGAKHSSVTVEMADMTTEYQCAVIDEIQMVGCRSRGFSFTRALLGLCSDELHVCGDPAVVPLIQRILEPTGDVVTVQYYERLSPLVPLKTTLGSFSNIKAGDCVVTFSRRSIYMLKRRIEMGGKHLCSVVYGSLPPETRTKQATMFNDQDSNLNVLVASDAIGMGLNLNISRIIFSTLEKFDGICNRELTVAEIKQIAGRAGRYGSKFPVGEVTCLNSDHLPLLHSALKSPSPIIERAGLFPTFDVLSLYSRLHGTDFFQPILERFLDKAKLSPDYFIADCEDMLKVAAIVDELPLGLYDKYLFCLSPVDIRDDISTKGLIQFAENYAKKGIVRLKEIFTPGTLQVPKSHNQLKELESIHKVLELYVWLSFRLEDSYPDRELAASQKSICSMLIEEYLERSGWQQNGRKDFLQKPKRLHQEYDASQLRKYFQEIDVRSK.

The transit peptide at 1-59 (MAVAAALLRRRALYSALASPSWLHDTSSCYICSISGTHSLVNHPNLRLQRGYHNSGKFD) directs the protein to the mitochondrion. Residues 72–213 (NAREKKRNVF…QRILEPTGDV (142 aa)) form the Helicase ATP-binding domain. 85-92 (GPTNSGKT) contacts ATP. The Helicase C-terminal domain maps to 214–388 (VTVQYYERLS…GLFPTFDVLS (175 aa)). A glycan (N-linked (GlcNAc...) asparagine) is linked at N309.

This sequence belongs to the helicase family. In terms of assembly, homodimer; in free form. Component of the mitochondrial degradosome (mtEXO) complex which is a heteropentamer containing 2 copies of SUPV3L1 and 3 copies of PNPT1. The cofactor is Mg(2+). It depends on Mn(2+) as a cofactor.

It is found in the nucleus. Its subcellular location is the mitochondrion matrix. The protein resides in the mitochondrion nucleoid. The catalysed reaction is ATP + H2O = ADP + phosphate + H(+). Its function is as follows. Major helicase player in mitochondrial RNA metabolism. Component of the mitochondrial degradosome (mtEXO) complex, that degrades 3' overhang double-stranded RNA with a 3'-to-5' directionality in an ATP-dependent manner. ATPase and ATP-dependent multisubstrate helicase, able to unwind double-stranded (ds) DNA and RNA, and RNA/DNA heteroduplexes in the 5'-to-3' direction. Plays a role in the RNA surveillance system in mitochondria; regulates the stability of mature mRNAs, the removal of aberrantly formed mRNAs and the rapid degradation of non coding processing intermediates. Confers salinity and drought stress tolerances by maintaining both photosynthesis and antioxidant machinery, probably via an increase in plant hormones levels such as gibberellic acid (GA(3)), the cytokinin zeatin (Z) and indole-3-acetic acid (IAA). This Oryza sativa subsp. japonica (Rice) protein is ATP-dependent RNA helicase SUV3, mitochondrial.